An 86-amino-acid chain; its full sequence is MAQKKGGGSTRNGRDSESKRLGVKVYGGQEILAGSIIVRQRGTRFHPGVNVGVGKDHTLFALADGKVKFGTKGALNKATVWVEAAN.

Gly residues predominate over residues 1–10; that stretch reads MAQKKGGGST. The interval 1–20 is disordered; the sequence is MAQKKGGGSTRNGRDSESKR.

This sequence belongs to the bacterial ribosomal protein bL27 family.

This is Large ribosomal subunit protein bL27 from Bordetella avium (strain 197N).